A 367-amino-acid chain; its full sequence is Alanine racemase (367 aa).

K40 (proton acceptor; specific for D-alanine) is an active-site residue. K40 carries the N6-(pyridoxal phosphate)lysine modification. Residue R136 participates in substrate binding. Catalysis depends on Y263, which acts as the Proton acceptor; specific for L-alanine. A substrate-binding site is contributed by M310.

Belongs to the alanine racemase family. It depends on pyridoxal 5'-phosphate as a cofactor.

The enzyme catalyses L-alanine = D-alanine. The protein operates within amino-acid biosynthesis; D-alanine biosynthesis; D-alanine from L-alanine: step 1/1. Catalyzes the interconversion of L-alanine and D-alanine. May also act on other amino acids. The polypeptide is Alanine racemase (alr) (Lactococcus lactis subsp. lactis (strain IL1403) (Streptococcus lactis)).